The sequence spans 532 residues: Flavin-containing monooxygenase 3 (532 aa).

FAD contacts are provided by residues 9–13, Glu-32, 40–41, and 61–62; these read GAGVS, LW, and NS. NADP(+) contacts are provided by residues 60-61 and 195-198; these read TN and SGCD. Ser-401 bears the Phosphoserine mark. The chain crosses the membrane as a helical span at residues 510–530; it reads FFFHWLKPFAIPILLIAVFLG.

This sequence belongs to the FMO family. FAD is required as a cofactor. In terms of tissue distribution, liver.

It is found in the microsome membrane. The protein localises to the endoplasmic reticulum membrane. The catalysed reaction is trimethylamine + NADPH + O2 = trimethylamine N-oxide + NADP(+) + H2O. It catalyses the reaction N,N-dimethylaniline + NADPH + O2 + H(+) = N,N-dimethylaniline N-oxide + NADP(+) + H2O. It carries out the reaction hypotaurine + NADPH + O2 + H(+) = taurine + NADP(+) + H2O. The enzyme catalyses (S)-nicotine + NADPH + O2 = trans-(S)-nicotine N(1')-oxide + NADP(+) + H2O. The catalysed reaction is albendazole + NADPH + O2 + H(+) = albendazole S-oxide + NADP(+) + H2O. Its function is as follows. Essential hepatic enzyme that catalyzes the oxygenation of a wide variety of nitrogen- and sulfur-containing compounds including drugs as well as dietary compounds. Plays an important role in the metabolism of trimethylamine (TMA), via the production of trimethylamine N-oxide (TMAO) metabolite. TMA is generated by the action of gut microbiota using dietary precursors such as choline, choline containing compounds, betaine or L-carnitine. By regulating TMAO concentration, FMO3 directly impacts both platelet responsiveness and rate of thrombus formation. In Macaca mulatta (Rhesus macaque), this protein is Flavin-containing monooxygenase 3 (FMO3).